The chain runs to 659 residues: Cysteine-rich receptor-like protein kinase 7 (659 aa).

The N-terminal stretch at 1 to 23 is a signal peptide; it reads MSSLFPFIFLFLFSFLTSFRASA. The Extracellular segment spans residues 24-273; sequence QDPRFLAYYC…SLSDKSGNSN (250 aa). 2 Gnk2-homologous domains span residues 27–131 and 142–244; these read RFLA…HKNI and FILR…LYDF. N-linked (GlcNAc...) asparagine glycosylation is found at Asn-35, Asn-42, Asn-60, Asn-69, and Asn-103. The N-linked (GlcNAc...) asparagine glycan is linked to Asn-246. Residues 274–294 form a helical membrane-spanning segment; the sequence is VVVVAVVVPIIVAVLIFIAGY. The Cytoplasmic portion of the chain corresponds to 295-659; that stretch reads CFFAKRAKKT…DKSMSDLDPR (365 aa). Residues 336–622 enclose the Protein kinase domain; that stretch reads FSENNKIGRG…ALPAPQQPGF (287 aa). ATP contacts are provided by residues 342–350 and Lys-364; that span reads IGRGGFGDV. Residue Tyr-409 is modified to Phosphotyrosine. The active-site Proton acceptor is Asp-461. Phosphoserine is present on Ser-465. Thr-501 is subject to Phosphothreonine. Residue Tyr-509 is modified to Phosphotyrosine. Residues 626-659 are disordered; the sequence is SRPGTNRLDSDQSTTNKSVTVSIDDKSMSDLDPR. Residues 636–646 show a composition bias toward polar residues; the sequence is DQSTTNKSVTV. Over residues 648–659 the composition is skewed to basic and acidic residues; that stretch reads IDDKSMSDLDPR.

It belongs to the protein kinase superfamily. Ser/Thr protein kinase family. CRK subfamily.

The protein localises to the membrane. The enzyme catalyses L-seryl-[protein] + ATP = O-phospho-L-seryl-[protein] + ADP + H(+). It catalyses the reaction L-threonyl-[protein] + ATP = O-phospho-L-threonyl-[protein] + ADP + H(+). The protein is Cysteine-rich receptor-like protein kinase 7 (CRK7) of Arabidopsis thaliana (Mouse-ear cress).